A 203-amino-acid polypeptide reads, in one-letter code: Ribosomal RNA large subunit methyltransferase E (203 aa).

The S-adenosyl-L-methionine site is built by Gly59, Trp61, Asp79, Asn95, and Asp118. Lys158 acts as the Proton acceptor in catalysis.

It belongs to the class I-like SAM-binding methyltransferase superfamily. RNA methyltransferase RlmE family.

The protein localises to the cytoplasm. The catalysed reaction is uridine(2552) in 23S rRNA + S-adenosyl-L-methionine = 2'-O-methyluridine(2552) in 23S rRNA + S-adenosyl-L-homocysteine + H(+). Functionally, specifically methylates the uridine in position 2552 of 23S rRNA at the 2'-O position of the ribose in the fully assembled 50S ribosomal subunit. The sequence is that of Ribosomal RNA large subunit methyltransferase E from Wigglesworthia glossinidia brevipalpis.